Consider the following 64-residue polypeptide: Tracheal antimicrobial peptide (64 aa).

Positions 1–26 (MRLHHLLLALLFLVLSAWSGFTQGVG) are cleaved as a signal peptide. Intrachain disulfides connect Cys31–Cys60, Cys38–Cys53, and Cys43–Cys61.

Belongs to the beta-defensin family. LAP/TAP subfamily. As to expression, tracheal epithelium.

It localises to the secreted. In terms of biological role, has antibacterial activity in vitro against Escherichia coli, Staphylococcus aureus, Klebsiella pneumonia, and Pseudomonas aeruginosa. In addition, the peptide is active against Candida albicans, indicating a broad spectrum of activity. The protein is Tracheal antimicrobial peptide of Bos taurus (Bovine).